Consider the following 174-residue polypeptide: Myelin basic protein (174 aa).

The interval 1–86 (MASQKRSSFR…GRPGDDNPVV (86 aa)) is disordered. A2 is subject to N-acetylalanine; in forms C1, C2 and C3. Q4 carries the post-translational modification Deamidated glutamine; in forms C1 and C2; partial. S8 carries the post-translational modification Phosphoserine; in forms C2 and C3. The residue at position 19 (S19) is a Phosphoserine; in form C2. The span at 22–35 (DHARHGSPRHRDSG) shows a compositional bias: basic and acidic residues. R25 is subject to Citrulline; in forms C1, C2 and C3. S34 carries the post-translational modification Phosphoserine; in forms C2 and C3. The residue at position 42 (R42) is a Citrulline; in form C3. Over residues 45-61 (GGDRHVPRRGFGKDIHA) the composition is skewed to basic and acidic residues. S65 bears the Phosphoserine; in forms C2 and C3 mark. Q72 carries the deamidated glutamine; in forms C1, C2 and C3; partial modification. S74 carries the post-translational modification Phosphoserine; in form C2. Deamidated asparagine; in forms C1, C2 and C3; partial is present on N91. T97 carries the phosphothreonine; in forms C2 and C3 modification. Q102 bears the Deamidated glutamine; in forms C1, C2 and C3; partial mark. Position 102 is a deamidated glutamine; in form C1 (Q102). Omega-N-methylarginine; in forms C1, C2 and C3; alternate is present on R106. R106 carries the symmetric dimethylarginine; in forms C1, C2 and C3; alternate modification. Phosphoserine; in forms C2 and C3 occurs at positions 114 and 142. A disordered region spans residues 126 to 174 (SGKFYEHKSAHKGHKGSYHEGQGTLSKIFKLGGSGSRPGSRSGSPVARR). Residue Q147 is modified to Deamidated glutamine; in forms C1, C2 and C3; partial. Positions 162–174 (RPGSRSGSPVARR) are enriched in low complexity. Position 165 is a phosphoserine; in forms C2 and C3 (S165). Position 166 is a citrulline; in forms C2 and C3 (R166). Residue S169 is modified to Phosphoserine; in forms C2 and C3.

The protein belongs to the myelin basic protein family. As to quaternary structure, homodimer. In terms of processing, several charge isomers are produced as a result of optional post-translational modifications, such as phosphorylation of serine or threonine residues, deamidation of glutamine or asparagine residues, citrullination and methylation of arginine residues. Chicken MBP contains 4 charge components denoted as C1, C2, C3 and C8. C1 lacks any phosphorylation sites, whereas C2 and C3 contain respectively 10 and 8 phosphorylation sites and arginine residues modified to citrulline. All three charge components contain deamidated glutamines and asparagine, and a methylated arginine.

Its subcellular location is the myelin membrane. Is, with PLP, the most abundant protein component of the myelin membrane in the CNS. Has a role in both the formation and stabilization of this compact multilayer arrangement of bilayers. Each splice variant and charge isomer may have a specialized function in the assembly of an optimized, biochemically functional myelin membrane. This chain is Myelin basic protein (MBP), found in Gallus gallus (Chicken).